The chain runs to 266 residues: uncharacterized protein (266 aa).

The protein belongs to the chlamydial CPn_0087/CT_309/TC_0583 family.

This is an uncharacterized protein from Chlamydia trachomatis serovar D (strain ATCC VR-885 / DSM 19411 / UW-3/Cx).